Consider the following 456-residue polypeptide: Dihydroorotase (456 aa).

Residues His60 and His62 each contribute to the Zn(2+) site. Substrate is bound by residues 62 to 64 (HFR) and Asn94. Zn(2+) contacts are provided by Glu146, His180, His234, and Asp313. The active site involves Asp313. Substrate is bound at residue His317.

It belongs to the metallo-dependent hydrolases superfamily. DHOase family. Class I DHOase subfamily. It depends on Zn(2+) as a cofactor.

It catalyses the reaction (S)-dihydroorotate + H2O = N-carbamoyl-L-aspartate + H(+). It functions in the pathway pyrimidine metabolism; UMP biosynthesis via de novo pathway; (S)-dihydroorotate from bicarbonate: step 3/3. Catalyzes the reversible cyclization of carbamoyl aspartate to dihydroorotate. The protein is Dihydroorotase of Methanosarcina mazei (strain ATCC BAA-159 / DSM 3647 / Goe1 / Go1 / JCM 11833 / OCM 88) (Methanosarcina frisia).